A 213-amino-acid chain; its full sequence is Probable septum site-determining protein MinC (213 aa).

The protein belongs to the MinC family. As to quaternary structure, interacts with MinD and FtsZ.

Functionally, cell division inhibitor that blocks the formation of polar Z ring septums. Rapidly oscillates between the poles of the cell to destabilize FtsZ filaments that have formed before they mature into polar Z rings. Prevents FtsZ polymerization. In Clostridium botulinum (strain Eklund 17B / Type B), this protein is Probable septum site-determining protein MinC.